Here is a 291-residue protein sequence, read N- to C-terminus: Protease HtpX homolog (291 aa).

2 helical membrane passes run I11–A31 and F34–Q54. Zn(2+) is bound at residue H140. E141 is an active-site residue. H144 lines the Zn(2+) pocket. The next 2 membrane-spanning stretches (helical) occupy residues I155 to I175 and A186 to V206. E215 contributes to the Zn(2+) binding site.

Belongs to the peptidase M48B family. Zn(2+) is required as a cofactor.

The protein localises to the cell membrane. The sequence is that of Protease HtpX homolog from Tropheryma whipplei (strain TW08/27) (Whipple's bacillus).